The chain runs to 357 residues: LINE-1 retrotransposable element ORF1 protein (357 aa).

The segment at 1–40 is disordered; sequence MAKGKRKNPTNRNQDHSPSSERSTPTPPSPGHPNTTENLD. Residues 59–156 are a coiled coil; it reads HKSLKDLQES…IENIDTTVKE (98 aa). Residues 179 to 274 are RNA recognition motif (RRM) domain; sequence NLRIIGIDEN…KGRPIRITPD (96 aa). The tract at residues 278 to 339 is C-terminal domain (CTD); the sequence is ETMKARRAWT…STNPALQRII (62 aa).

Belongs to the transposase 22 family. As to quaternary structure, homotrimer (via coiled coil domain). May also form larger homooligomers. Interacts with Tex19.1 and UBR2. Interacts with MOV10. In terms of processing, polyubiquitinated, probably by UBR2, which induces its degradation. As to expression, expressed in meiotic spermatocytes and in the cerebellum (at protein level).

It localises to the nucleus. The protein resides in the nucleolus. It is found in the cytoplasm. The protein localises to the cytoplasmic ribonucleoprotein granule. Its subcellular location is the stress granule. In terms of biological role, nucleic acid-binding protein which is essential for retrotransposition of LINE-1 elements in the genome. Functions as a nucleic acid chaperone binding its own transcript and therefore preferentially mobilizing the transcript from which they are encoded. This chain is LINE-1 retrotransposable element ORF1 protein, found in Mus musculus (Mouse).